The primary structure comprises 103 residues: G0/G1 switch protein 2 (103 aa).

Directly interacts with BCL2; this interaction prevents the formation of the anti-apoptotic BAX-BCL2 complex.

The protein resides in the mitochondrion. In terms of biological role, promotes apoptosis by binding to BCL2, hence preventing the formation of protective BCL2-BAX heterodimers. The polypeptide is G0/G1 switch protein 2 (G0s2) (Mus musculus (Mouse)).